Reading from the N-terminus, the 475-residue chain is UDP-N-acetylmuramate--L-alanine ligase (475 aa).

Position 125–131 (125–131 (GTHGKTS)) interacts with ATP.

Belongs to the MurCDEF family.

Its subcellular location is the cytoplasm. The enzyme catalyses UDP-N-acetyl-alpha-D-muramate + L-alanine + ATP = UDP-N-acetyl-alpha-D-muramoyl-L-alanine + ADP + phosphate + H(+). Its pathway is cell wall biogenesis; peptidoglycan biosynthesis. Its function is as follows. Cell wall formation. The sequence is that of UDP-N-acetylmuramate--L-alanine ligase from Mycolicibacterium gilvum (strain PYR-GCK) (Mycobacterium gilvum (strain PYR-GCK)).